The primary structure comprises 141 residues: Pheromone-binding protein-related protein 6 (141 aa).

The first 16 residues, 1-16 (MVKYPLILLLIGCAAA), serve as a signal peptide directing secretion. Cystine bridges form between cysteine 41–cysteine 72, cysteine 68–cysteine 120, and cysteine 111–cysteine 129.

The protein belongs to the PBP/GOBP family. Antenna. Mostly expressed in two types of sensory hairs, sensilla trichodea and small sensilla basiconica, in the ventro-lateral region of the third antennal segment (at protein level).

It localises to the secreted. The chain is Pheromone-binding protein-related protein 6 (Obp83b) from Drosophila melanogaster (Fruit fly).